Here is a 206-residue protein sequence, read N- to C-terminus: Ras-related protein RABG3a (206 aa).

Residue 15–22 participates in GTP binding; that stretch reads GDSGVGKT. Residues 37-45 carry the Effector region motif; the sequence is YKATIGADF. GTP-binding positions include 63–67, 125–128, and 158–159; these read DTAGQ, NKID, and SA. 2 S-geranylgeranyl cysteine lipidation sites follow: cysteine 204 and cysteine 206. Cysteine 206 bears the Cysteine methyl ester mark.

The protein belongs to the small GTPase superfamily. Rab family.

It localises to the cell membrane. Its function is as follows. Intracellular vesicle trafficking and protein transport. The protein is Ras-related protein RABG3a (RABG3A) of Arabidopsis thaliana (Mouse-ear cress).